Reading from the N-terminus, the 412-residue chain is UPF0761 membrane protein lpg0643 (412 aa).

A run of 6 helical transmembrane segments spans residues 36-56, 99-119, 137-157, 177-197, 210-230, and 241-261; these read ALAFTSLLAVVPLMSVGLAIF, LSIWGIVFLIFTALLVMFTIE, AFLLYWAIISLAPVLLGLSLA, ILHYSPFFLSLIGFTFLYVVV, GGLVAAILFESAKHAFAYYLI, and AFATVPIFFIWVYWVWIITLL.

The protein belongs to the UPF0761 family.

The protein resides in the cell inner membrane. This Legionella pneumophila subsp. pneumophila (strain Philadelphia 1 / ATCC 33152 / DSM 7513) protein is UPF0761 membrane protein lpg0643.